The primary structure comprises 532 residues: Glycerophosphocholine permease GIT4 (532 aa).

The next 6 membrane-spanning stretches (helical) occupy residues 55 to 75 (LWPA…NAGI), 98 to 118 (NIGS…GYIS), 126 to 146 (GMLT…VASW), 150 to 170 (VQGF…AIGA), 201 to 221 (AMID…LWIF), and 229 to 249 (VWRL…FIRL). The N-linked (GlcNAc...) asparagine glycan is linked to asparagine 266. The helical transmembrane segment at 272 to 292 (WWLIIKFYWFRLTVVSLIWFI) threads the bilayer. N-linked (GlcNAc...) asparagine glycosylation occurs at asparagine 314. The next 3 helical transmembrane spans lie at 321 to 341 (WGWS…GAFI), 349 to 369 (LTLA…SACL), and 375 to 395 (HVAG…FGPG). Asparagine 396 carries an N-linked (GlcNAc...) asparagine glycan. 2 helical membrane passes run 416-436 (GIAA…FPAI) and 450-470 (VPFY…IFFV).

Belongs to the major facilitator superfamily. Sugar transporter (TC 2.A.1.1) family.

Its subcellular location is the cell membrane. The catalysed reaction is sn-glycerol 3-phosphocholine(out) = sn-glycerol 3-phosphocholine(in). Functionally, glycerophosphodiester transporter that mediates uptake of glycerophosphocholine (GroPCho) with GIT3. Does not possess detectable glycerophosphoinositol (GroPIns) transport activity. The expanded ability to utilize GroPIns and GroPCho results from the organism's pathogenic nature and its need to occupy a variety of environments within its host organism. This possibility is buttressed by the fact that GroPIns and GroPCho are present and abundant in human fluids. This Candida albicans (strain SC5314 / ATCC MYA-2876) (Yeast) protein is Glycerophosphocholine permease GIT4.